The sequence spans 885 residues: MQERYQPNSVEAAAQQTWQARDAYLVHEHAKNPDGSEKPKFYACSMLPYPSGKLHMGHVRNYTINDMMARQLRMRGYNVLMPMGWDAFGMPAENAAIKSKVPPAKWTYDNIAYMKKQMKAMGLAIDWSREMCACDPKYYKWNQWLFLKMLEKGIAYRKTQVVNWDPVDQTVLANEQVIDGRGWRSGAPVEKREIPGYYLRITDYAEELLDQVSTNLPGWPERVRLMQENWIGKSEGLRFAFPHRIAGADGKLIQDGKLYVFTTRADTIMGVTFCAVAPEHPLATHAAQSNPALAAFVEQCKLGGTTEAEMATREKEGMPTGLTVTHPLTGAEIDVWVGNYVLMTYGDGAVMGVPAHDERDFAFARKYGLPIRQVVALEGKTYSTDAWQEWYGDKQAGRTVNSGKYDGLAYQAAVDTIAADLAAQGLGEKQTTWRLRDWGISRQRYWGTPIPIIHCADCGPVPVPEQDLPVVLPDDLIPDGSGNPLAKNEAFLSCSCPRCGKPARRETDTMDTFVDSSWYFMRYTSPDNDQAMVDARNDYWMPMDQYIGGIEHAVLHLLYARFWTKVMRDLSLLNFDEPFTKLLCQGMVLNHIYSRKTPQGGIEYFWPEEVDNVYDAKGAIVGAKLQRDGSEVNYGGVGTMSKSKNNGVDPQSLIDTLGADTARLFVMFASPPEQTLEWSDSGVEGANRFLRRLWALGYAQREAVGRGLATGADWAQAPAPVKELRREVYGLLKQADYDYQRIQYNTVVSACMKMLNAIDDAPLPEGPAADAARAETLGLLLRVLYPVVPHITWHLWQDLGYAEHLGDLLDAPWPHVDEAALVADEIELMLQVNGKLRGSIRVAAKAPKEDIERIAAAQEEVARFLEGRPPKRVIVVPGKLVNVVG.

Residues 48-58 carry the 'HIGH' region motif; sequence PYPSGKLHMGH. Positions 639 to 643 match the 'KMSKS' region motif; the sequence is TMSKS. Position 642 (Lys-642) interacts with ATP.

This sequence belongs to the class-I aminoacyl-tRNA synthetase family.

It localises to the cytoplasm. The enzyme catalyses tRNA(Leu) + L-leucine + ATP = L-leucyl-tRNA(Leu) + AMP + diphosphate. The polypeptide is Leucine--tRNA ligase (Bordetella parapertussis (strain 12822 / ATCC BAA-587 / NCTC 13253)).